A 279-amino-acid polypeptide reads, in one-letter code: Urease accessory protein UreD (279 aa).

This sequence belongs to the UreD family. UreD, UreF and UreG form a complex that acts as a GTP-hydrolysis-dependent molecular chaperone, activating the urease apoprotein by helping to assemble the nickel containing metallocenter of UreC. The UreE protein probably delivers the nickel.

The protein resides in the cytoplasm. In terms of biological role, required for maturation of urease via the functional incorporation of the urease nickel metallocenter. This chain is Urease accessory protein UreD, found in Nostoc punctiforme (strain ATCC 29133 / PCC 73102).